An 811-amino-acid polypeptide reads, in one-letter code: G-type lectin S-receptor-like serine/threonine-protein kinase LECRK3 (811 aa).

The signal sequence occupies residues M1–A23. Positions Q24 to G153 constitute a Bulb-type lectin domain. At Q24–S464 the chain is on the extracellular side. N-linked (GlcNAc...) asparagine glycans are attached at residues N26, N39, N59, N219, N226, N237, and N242. Positions P292–R344 constitute an EGF-like; atypical domain. 5 disulfide bridges follow: C296–C314, C308–C325, C327–C343, C389–C411, and C393–C399. A glycan (N-linked (GlcNAc...) asparagine) is linked at N321. A PAN domain is found at C352 to T430. Residues L465–T485 form a helical membrane-spanning segment. Topologically, residues Y486–A811 are cytoplasmic. The 275-residue stretch at G521–V795 folds into the Protein kinase domain. Residues L527–V535 and K551 each bind ATP. D645 functions as the Proton acceptor in the catalytic mechanism.

It belongs to the protein kinase superfamily. Ser/Thr protein kinase family.

The protein localises to the membrane. It catalyses the reaction L-seryl-[protein] + ATP = O-phospho-L-seryl-[protein] + ADP + H(+). It carries out the reaction L-threonyl-[protein] + ATP = O-phospho-L-threonyl-[protein] + ADP + H(+). Functionally, involved in resistance against the herbivorous insect brown planthopper (N.lugens, BPH). Member of the BPH3 (BPH resistance locus 3) cluster which contains LECRK1, LECRK2 and LECRK3. The sequence is that of G-type lectin S-receptor-like serine/threonine-protein kinase LECRK3 from Oryza sativa subsp. indica (Rice).